Consider the following 189-residue polypeptide: 3-hydroxyanthranilate 3,4-dioxygenase (189 aa).

Arg46 is a binding site for O2. Fe cation is bound by residues His50, Glu56, and His94. Substrate is bound at residue Glu56. Residues Arg98 and Glu109 each contribute to the substrate site. Residues Cys124, Cys127, Cys161, and Cys164 each coordinate Fe cation.

The protein belongs to the 3-HAO family. Homodimer. Requires Fe(2+) as cofactor.

The enzyme catalyses 3-hydroxyanthranilate + O2 = (2Z,4Z)-2-amino-3-carboxymuconate 6-semialdehyde. It participates in cofactor biosynthesis; NAD(+) biosynthesis; quinolinate from L-kynurenine: step 3/3. Functionally, catalyzes the oxidative ring opening of 3-hydroxyanthranilate to 2-amino-3-carboxymuconate semialdehyde, which spontaneously cyclizes to quinolinate. The polypeptide is 3-hydroxyanthranilate 3,4-dioxygenase (Shewanella woodyi (strain ATCC 51908 / MS32)).